A 343-amino-acid chain; its full sequence is Ribosomal RNA small subunit methyltransferase C (343 aa).

The protein belongs to the methyltransferase superfamily. RsmC family. As to quaternary structure, monomer.

The protein resides in the cytoplasm. The enzyme catalyses guanosine(1207) in 16S rRNA + S-adenosyl-L-methionine = N(2)-methylguanosine(1207) in 16S rRNA + S-adenosyl-L-homocysteine + H(+). In terms of biological role, specifically methylates the guanine in position 1207 of 16S rRNA in the 30S particle. This chain is Ribosomal RNA small subunit methyltransferase C, found in Shigella flexneri.